The sequence spans 379 residues: Serpin B5 (379 aa).

Residues Asn133, Asn176, and Asn361 are each glycosylated (N-linked (GlcNAc...) asparagine).

It belongs to the serpin family. Ov-serpin subfamily.

Its subcellular location is the secreted. The protein resides in the extracellular space. Functionally, may not exhibit serine protease inhibitory activity. The chain is Serpin B5 (serpinb5) from Xenopus tropicalis (Western clawed frog).